Here is a 78-residue protein sequence, read N- to C-terminus: Small ribosomal subunit protein bS16c (78 aa).

The protein belongs to the bacterial ribosomal protein bS16 family.

The protein resides in the plastid. It localises to the chloroplast. In Gracilaria tenuistipitata var. liui (Red alga), this protein is Small ribosomal subunit protein bS16c.